Reading from the N-terminus, the 102-residue chain is Large ribosomal subunit protein uL24 (102 aa).

This sequence belongs to the universal ribosomal protein uL24 family. As to quaternary structure, part of the 50S ribosomal subunit.

One of two assembly initiator proteins, it binds directly to the 5'-end of the 23S rRNA, where it nucleates assembly of the 50S subunit. Functionally, one of the proteins that surrounds the polypeptide exit tunnel on the outside of the subunit. In Polynucleobacter asymbioticus (strain DSM 18221 / CIP 109841 / QLW-P1DMWA-1) (Polynucleobacter necessarius subsp. asymbioticus), this protein is Large ribosomal subunit protein uL24.